We begin with the raw amino-acid sequence, 345 residues long: Cysteinyl leukotriene receptor 2 (345 aa).

Residues M1–P43 lie on the Extracellular side of the membrane. N20 and N29 each carry an N-linked (GlcNAc...) asparagine glycan. Residues I44–F64 traverse the membrane as a helical segment. The Cytoplasmic portion of the chain corresponds to L65–S73. Residues V74–F94 form a helical membrane-spanning segment. The Extracellular portion of the chain corresponds to R95–Y124. Residues C112 and C188 are joined by a disulfide bond. A helical transmembrane segment spans residues S125 to F145. Over R146–K154 the chain is Cytoplasmic. The chain crosses the membrane as a helical span at residues N155–L175. The Extracellular portion of the chain corresponds to K176–V205. 2 N-linked (GlcNAc...) asparagine glycosylation sites follow: N177 and N184. Residues A206–I226 form a helical membrane-spanning segment. Topologically, residues R227 to A246 are cytoplasmic. The helical transmembrane segment at L247–L267 threads the bilayer. Topologically, residues R268–A287 are extracellular. Residues V288–F308 form a helical membrane-spanning segment. The Cytoplasmic segment spans residues A309–V345.

It belongs to the G-protein coupled receptor 1 family.

The protein resides in the cell membrane. Functionally, receptor for cysteinyl leukotrienes. The response is mediated via a G-protein that activates a phosphatidylinositol-calcium second messenger system. This chain is Cysteinyl leukotriene receptor 2 (CYSLTR2), found in Sus scrofa (Pig).